Reading from the N-terminus, the 338-residue chain is Probable tRNA pseudouridine synthase B (338 aa).

The active-site Nucleophile is the Asp82. The 76-residue stretch at 250 to 325 (LPKVWIRDSA…IAVDVDKVFM (76 aa)) folds into the PUA domain.

It belongs to the pseudouridine synthase TruB family. Type 2 subfamily.

It catalyses the reaction uridine(55) in tRNA = pseudouridine(55) in tRNA. Could be responsible for synthesis of pseudouridine from uracil-55 in the psi GC loop of transfer RNAs. This Thermococcus kodakarensis (strain ATCC BAA-918 / JCM 12380 / KOD1) (Pyrococcus kodakaraensis (strain KOD1)) protein is Probable tRNA pseudouridine synthase B.